The chain runs to 115 residues: Rubredoxin (115 aa).

Positions Ser15–Thr66 constitute a Rubredoxin-like domain. 4 residues coordinate Fe cation: Cys20, Cys23, Cys53, and Cys56.

Belongs to the rubredoxin family. The cofactor is Fe(3+).

Its function is as follows. Rubredoxin is a small nonheme, iron protein lacking acid-labile sulfide. Its single Fe, chelated to 4 Cys, functions as an electron acceptor and may also stabilize the conformation of the molecule. Could be involved in hydrogenase-linked redox processes. The chain is Rubredoxin (rub) from Synechocystis sp. (strain ATCC 27184 / PCC 6803 / Kazusa).